The primary structure comprises 82 residues: Neuropeptide-like peptide 36 (82 aa).

This Caenorhabditis elegans protein is Neuropeptide-like peptide 36 (nlp-36).